The following is a 47-amino-acid chain: uncharacterized protein (47 aa).

This is an uncharacterized protein from Saccharomyces cerevisiae (strain ATCC 204508 / S288c) (Baker's yeast).